Reading from the N-terminus, the 167-residue chain is Inclusion membrane protein G (167 aa).

The next 2 membrane-spanning stretches (helical) occupy residues 33–57 (VVLA…AVLF) and 63–88 (VLPY…LRSL). The interval 94–167 (SCKKRSPEEI…DNSRSRSRSF (74 aa)) is sufficient for interaction with human 14-3-3 beta protein. The disordered stretch occupies residues 97–167 (KRSPEEIEGA…DNSRSRSRSF (71 aa)). Residues 122–135 (ESASPQASPTSSTL) are compositionally biased toward low complexity. The Phosphorylation-dependent binding motif motif lies at 161–166 (RSRSRS). A Phosphoserine modification is found at serine 166.

In terms of assembly, in infected HeLa cells colocalizes with host 14-3-3 protein (YWHAB); phosphorylation of Ser-166 is probably required. Interacts with Pkn1. Post-translationally, phosphorylated, possibly at more than one position, in infected HeLa cells. Phosphorylated by chlamydial kinase Pnk1.

Its subcellular location is the secreted. The protein localises to the host vacuole. It is found in the host pathogen-containing vacuole. It localises to the host pathogen-containing vacuole membrane. Its function is as follows. Inclusion membrane protein probably involved in early modification events of the chlamydial inclusion. The chain is Inclusion membrane protein G from Chlamydia trachomatis serovar L2 (strain ATCC VR-902B / DSM 19102 / 434/Bu).